A 181-amino-acid chain; its full sequence is Large ribosomal subunit protein uL5c (181 aa).

Belongs to the universal ribosomal protein uL5 family. In terms of assembly, part of the 50S ribosomal subunit; contacts the 5S rRNA.

The protein localises to the plastid. Its subcellular location is the chloroplast. Functionally, binds 5S rRNA, forms part of the central protuberance of the 50S subunit. The chain is Large ribosomal subunit protein uL5c (rpl5) from Guillardia theta (Cryptophyte).